Reading from the N-terminus, the 315-residue chain is Calumenin-A (315 aa).

A signal peptide spans 1 to 19; that stretch reads MEIRPLLMCFALCVVYATS. 6 consecutive EF-hand domains span residues 68-103, 104-139, 151-186, 188-223, 229-264, and 265-300; these read ESKNRLGKIVEKIDADEDGFVTEAELKAWIKKAQKK, YIYDNVERQWKDFDLNNDRMISWEEYKNVTYGTYLD, QMMARDERRFKMADGNGDHIADKEEFTAFLHPEEYE, MKDIVVLETMEDIDKNGDGFIDLEEYIGDMYNHEDE, WVATEREQFSEFRDKNKDGKMDREETMDWILPADYD, and HAEAEAKHLVYESDTNKDGKLTKEEILNKYDLFVGS. Residues D81, D83, D85, E92, D117, N119, D121, M123, and E128 each contribute to the Ca(2+) site. A glycan (N-linked (GlcNAc...) asparagine) is linked at N131. D164, N166, D168, E175, D201, N203, D205, E212, D242, N244, D246, K248, E253, D278, N280, D282, K284, and E289 together coordinate Ca(2+). Positions 312–315 match the Prevents secretion from ER motif; sequence HDEF.

Belongs to the CREC family. As to quaternary structure, interacts with ggcx.

It is found in the endoplasmic reticulum membrane. It localises to the golgi apparatus. The protein localises to the secreted. The protein resides in the melanosome. Its subcellular location is the sarcoplasmic reticulum lumen. Involved in regulation of vitamin K-dependent carboxylation of multiple N-terminal glutamate residues. Seems to inhibit gamma-carboxylase ggcx. Binds 7 calcium ions with a low affinity. This chain is Calumenin-A (calua), found in Danio rerio (Zebrafish).